The following is a 510-amino-acid chain: RNA-splicing ligase RtcB homolog (510 aa).

The Mn(2+) site is built by D124, C127, H232, H264, and H358. 231–235 (NHYAE) provides a ligand contact to GMP. GMP contacts are provided by residues 358-359 (HN), 407-410 (GGTM), S414, 433-436 (HGAG), and K509. The GMP-histidine intermediate role is filled by H433.

The protein belongs to the RtcB family. As to quaternary structure, catalytic component of the tRNA-splicing ligase complex. The cofactor is Mn(2+).

It catalyses the reaction a 3'-end 3'-phospho-ribonucleotide-RNA + a 5'-end dephospho-ribonucleoside-RNA + GTP = a ribonucleotidyl-ribonucleotide-RNA + GMP + diphosphate. The enzyme catalyses a 3'-end 2',3'-cyclophospho-ribonucleotide-RNA + a 5'-end dephospho-ribonucleoside-RNA + GTP + H2O = a ribonucleotidyl-ribonucleotide-RNA + GMP + diphosphate + H(+). In terms of biological role, catalytic subunit of the tRNA-splicing ligase complex that acts by directly joining spliced tRNA halves to mature-sized tRNAs by incorporating the precursor-derived splice junction phosphate into the mature tRNA as a canonical 3',5'-phosphodiester. May act as an RNA ligase with broad substrate specificity, and may function toward other RNAs. This is RNA-splicing ligase RtcB homolog from Trichoplax adhaerens (Trichoplax reptans).